Here is a 262-residue protein sequence, read N- to C-terminus: Ubiquinone biosynthesis protein COQ4, mitochondrial (262 aa).

4 residues coordinate Zn(2+): H154, D155, H158, and E170. The tract at residues 243-262 is disordered; it reads LGIEQPPDLRQMKKDMAKKK. Over residues 252–262 the composition is skewed to basic and acidic residues; that stretch reads RQMKKDMAKKK.

Belongs to the COQ4 family. In terms of assembly, component of a multi-subunit COQ enzyme complex, composed of at least COQ3, COQ4, COQ5, COQ6, COQ7 and COQ9. Zn(2+) is required as a cofactor.

It is found in the mitochondrion inner membrane. It catalyses the reaction a 4-hydroxy-3-methoxy-5-(all-trans-polyprenyl)benzoate + H(+) = a 2-methoxy-6-(all-trans-polyprenyl)phenol + CO2. It participates in cofactor biosynthesis; ubiquinone biosynthesis. Functionally, lyase that catalyzes the C1-decarboxylation of 4-hydroxy-3-methoxy-5-(all-trans-polyprenyl)benzoic acid into 2-methoxy-6-(all-trans-polyprenyl)phenol during ubiquinone biosynthesis. The chain is Ubiquinone biosynthesis protein COQ4, mitochondrial from Yarrowia lipolytica (strain CLIB 122 / E 150) (Yeast).